A 303-amino-acid chain; its full sequence is Ribonuclease Z (303 aa).

Positions 61, 63, 65, 66, 139, 207, and 266 each coordinate Zn(2+). The active-site Proton acceptor is the Asp65.

The protein belongs to the RNase Z family. Homodimer. The cofactor is Zn(2+).

The catalysed reaction is Endonucleolytic cleavage of RNA, removing extra 3' nucleotides from tRNA precursor, generating 3' termini of tRNAs. A 3'-hydroxy group is left at the tRNA terminus and a 5'-phosphoryl group is left at the trailer molecule.. In terms of biological role, zinc phosphodiesterase, which displays some tRNA 3'-processing endonuclease activity. Probably involved in tRNA maturation, by removing a 3'-trailer from precursor tRNA. The polypeptide is Ribonuclease Z (Clostridium kluyveri (strain ATCC 8527 / DSM 555 / NBRC 12016 / NCIMB 10680 / K1)).